Reading from the N-terminus, the 246-residue chain is Trypsin V-A (246 aa).

Positions 1–15 (MKICIFFTLLGTVAA) are cleaved as a signal peptide. A propeptide spans 16-24 (FPTEDNDDR) (activation peptide). Residues 25–244 (IVGGYTCQEH…YLNWIHQTIA (220 aa)) enclose the Peptidase S1 domain. Intrachain disulfides connect C31/C160, C49/C65, C133/C233, C140/C206, C171/C185, and C196/C220. H64 acts as the Charge relay system in catalysis. The Ca(2+) site is built by E76, N78, and E86. Residue D108 is the Charge relay system of the active site. Residue S200 is the Charge relay system of the active site.

The protein belongs to the peptidase S1 family. The cofactor is Ca(2+).

Its subcellular location is the secreted. The protein resides in the extracellular space. It carries out the reaction Preferential cleavage: Arg-|-Xaa, Lys-|-Xaa.. This is Trypsin V-A from Rattus norvegicus (Rat).